The chain runs to 1297 residues: Phosphoribosylformylglycinamidine synthase (1297 aa).

The interval 305–324 (FPGAATGSGGEIRDEGATGR) is disordered. 307–318 (GAATGSGGEIRD) lines the ATP pocket. Positions 679, 718, 722, and 886 each coordinate Mg(2+). Ser-888 is an ATP binding site. Positions 1044–1297 (IAVLREQGVN…LFRNARVFFK (254 aa)) constitute a Glutamine amidotransferase type-1 domain. The active-site Nucleophile is Cys-1137. Residues His-1262 and Glu-1264 contribute to the active site.

In the N-terminal section; belongs to the FGAMS family. As to quaternary structure, monomer.

The protein resides in the cytoplasm. The catalysed reaction is N(2)-formyl-N(1)-(5-phospho-beta-D-ribosyl)glycinamide + L-glutamine + ATP + H2O = 2-formamido-N(1)-(5-O-phospho-beta-D-ribosyl)acetamidine + L-glutamate + ADP + phosphate + H(+). The protein operates within purine metabolism; IMP biosynthesis via de novo pathway; 5-amino-1-(5-phospho-D-ribosyl)imidazole from N(2)-formyl-N(1)-(5-phospho-D-ribosyl)glycinamide: step 1/2. In terms of biological role, phosphoribosylformylglycinamidine synthase involved in the purines biosynthetic pathway. Catalyzes the ATP-dependent conversion of formylglycinamide ribonucleotide (FGAR) and glutamine to yield formylglycinamidine ribonucleotide (FGAM) and glutamate. This is Phosphoribosylformylglycinamidine synthase from Mannheimia succiniciproducens (strain KCTC 0769BP / MBEL55E).